Here is a 549-residue protein sequence, read N- to C-terminus: Glucose-6-phosphate isomerase (549 aa).

Residue Glu355 is the Proton donor of the active site. Active-site residues include His386 and Lys514.

It belongs to the GPI family.

Its subcellular location is the cytoplasm. It catalyses the reaction alpha-D-glucose 6-phosphate = beta-D-fructose 6-phosphate. The protein operates within carbohydrate biosynthesis; gluconeogenesis. It functions in the pathway carbohydrate degradation; glycolysis; D-glyceraldehyde 3-phosphate and glycerone phosphate from D-glucose: step 2/4. Catalyzes the reversible isomerization of glucose-6-phosphate to fructose-6-phosphate. The sequence is that of Glucose-6-phosphate isomerase from Sodalis glossinidius (strain morsitans).